The primary structure comprises 1460 residues: Probable outer membrane protein PmpC (1460 aa).

Positions 1–20 (MKFLSATAVFAAALPSITSA) are cleaved as a signal peptide. Disordered regions lie at residues 21–48 (SSVE…FTEI), 92–212 (SEEN…PDKD), 279–372 (TPPA…ESGS), 455–549 (TPEE…DSSI), and 993–1021 (VDTS…TAQA). Over residues 34–44 (SSRTGSSSSQS) the composition is skewed to low complexity. Over residues 97–114 (QASFQDSAQNQTENASEG) the composition is skewed to polar residues. Residues 115–137 (NSPNSENTNQSSTTETESITTDE) show a composition bias toward low complexity. Residues 138-155 (QVQNDNESAASVPTTVET) are compositionally biased toward polar residues. A compositionally biased stretch (low complexity) spans 290–327 (NDPSGSNGNDGSDDSNSSGNTDSNESNPNNSASNNTGS). Positions 328–358 (ENELSSSTPSAQLPNPATPFLSSVSTNSQPI) are enriched in polar residues. Residues 461–471 (LKSSQLNNQNP) are compositionally biased toward low complexity. Residues 487–501 (SLETSPITNQDSASS) are compositionally biased toward polar residues. Composition is skewed to low complexity over residues 504–548 (AIFR…SDSS) and 995–1018 (TSTN…STPT). The region spanning 1167-1460 (DEVAYNNLWI…MINCGARMTF (294 aa)) is the Autotransporter domain.

This sequence belongs to the PMP outer membrane protein family.

The protein resides in the secreted. It localises to the cell wall. Its subcellular location is the cell outer membrane. The protein is Probable outer membrane protein PmpC (pmpC) of Chlamydia muridarum (strain MoPn / Nigg).